The sequence spans 341 residues: S-adenosylmethionine:tRNA ribosyltransferase-isomerase (341 aa).

The protein belongs to the QueA family. As to quaternary structure, monomer.

It is found in the cytoplasm. The catalysed reaction is 7-aminomethyl-7-carbaguanosine(34) in tRNA + S-adenosyl-L-methionine = epoxyqueuosine(34) in tRNA + adenine + L-methionine + 2 H(+). It participates in tRNA modification; tRNA-queuosine biosynthesis. Functionally, transfers and isomerizes the ribose moiety from AdoMet to the 7-aminomethyl group of 7-deazaguanine (preQ1-tRNA) to give epoxyqueuosine (oQ-tRNA). This chain is S-adenosylmethionine:tRNA ribosyltransferase-isomerase, found in Staphylococcus epidermidis (strain ATCC 12228 / FDA PCI 1200).